Here is a 676-residue protein sequence, read N- to C-terminus: Beta-taxilin (676 aa).

Disordered regions lie at residues 1-55 and 71-131; these read MEND…DISE and AASL…EQKL. Composition is skewed to polar residues over residues 8-25 and 34-45; these read EKQQ…QGQS and QPLSPTNQTSAQ. The segment covering 75-92 has biased composition (basic and acidic residues); the sequence is VEKEGTTAETDKPEKEDV. A compositionally biased stretch (acidic residues) spans 93 to 105; the sequence is GSMEDAECEDVNE. The segment covering 106 to 131 has biased composition (basic and acidic residues); sequence ESEKDKPAPGDASRAKEPSASKEQKL. Residues 157–461 adopt a coiled-coil conformation; that stretch reads EEKLDLLFKK…LYRKIKQAQL (305 aa). A disordered region spans residues 464–486; it reads EVNGNDILEEDDDANTNPSSSEQ.

Belongs to the taxilin family. As to expression, specifically expressed in skeletal and cardiac muscle.

It localises to the cytoplasm. Promotes neurite-outgrowth. May be involved in intracellular vesicle traffic. This Gallus gallus (Chicken) protein is Beta-taxilin (TXLNB).